Consider the following 477-residue polypeptide: MAASALRGLAVAGGGESSESEDDGWEIGYVDQTSQKLKGQMLPIEEKKEKFKKALTTGDVSLVQELLDSGIISVDATFRYGWTPLMYAASVANAELVRVLLDRGANASFEKDKQTILITACSAHGSEEQILKCVELLLSRNADPNVACRRLMTPIMYAARDGHTQVVALLVAHGAEVNTQDENGYTALTWAARQGRKSIVLKLLELGANKMLQTKDGKLPSEIAKRNKHHEIFSLLSFTLNPLEGKLQQLTKEETICKILTTDSDRENDHIFSSYAAFGDLEVFLHGLGLEHMTDLLKERDITLRHLLTMREDEFTKNGFTSKDQQKILTALKELEVEEIQFGELSEEAKLEISGDEFLNFLLKLNKQCGHLITAVQNIITELPVNSQKIVLEWASPQNFTSVCEELVNNVEDLSEEVCNLKDLIQKLQNERENDPTHIPLREEVSTWNSRILKRTAITVCGFGFLLFICKITFQRK.

Phosphoserine is present on residues S17, S18, and S20. ANK repeat units lie at residues 46–76, 80–109, 112–146, 150–179, 183–212, and 216–245; these read EKKE…SVDA, YGWT…NASF, DKQT…DPNV, RLMT…EVNT, NGYT…NKML, and DGKL…PLEG. The SAM domain maps to 274-336; sequence SYAAFGDLEV…KILTALKELE (63 aa).

Interacts with DDX4, PIWIL1, RANBP9 and TDRD1.

Its subcellular location is the cytoplasm. Plays a central role during spermatogenesis by repressing transposable elements and preventing their mobilization, which is essential for the germline integrity. Acts via the piRNA metabolic process, which mediates the repression of transposable elements during meiosis by forming complexes composed of piRNAs and Piwi proteins and governs the methylation and subsequent repression of transposons. Its association with pi-bodies suggests a participation in the primary piRNAs metabolic process. Required prior to the pachytene stage to facilitate the production of multiple types of piRNAs, including those associated with repeats involved in the regulation of retrotransposons. May act by mediating protein-protein interactions during germ cell maturation. In Ateles geoffroyi (Black-handed spider monkey), this protein is Ankyrin repeat, SAM and basic leucine zipper domain-containing protein 1 (ASZ1).